Reading from the N-terminus, the 209-residue chain is Methylated-DNA--protein-cysteine methyltransferase (209 aa).

C5 contacts Zn(2+). S14 carries the phosphoserine modification. The Zn(2+) site is built by C24, H29, and H89. DNA-binding residues include T99, Y118, Q119, N127, and R132. Residue C149 is the Nucleophile; methyl group acceptor of the active site. S155 contacts DNA.

It belongs to the MGMT family. Zn(2+) is required as a cofactor.

The protein resides in the nucleus. It carries out the reaction a 6-O-methyl-2'-deoxyguanosine in DNA + L-cysteinyl-[protein] = S-methyl-L-cysteinyl-[protein] + a 2'-deoxyguanosine in DNA. The catalysed reaction is a 4-O-methyl-thymidine in DNA + L-cysteinyl-[protein] = a thymidine in DNA + S-methyl-L-cysteinyl-[protein]. Functionally, involved in the cellular defense against the biological effects of O6-methylguanine (O6-MeG) and O4-methylthymine (O4-MeT) in DNA. Repairs the methylated nucleobase in DNA by stoichiometrically transferring the methyl group to a cysteine residue in the enzyme. This is a suicide reaction: the enzyme is irreversibly inactivated. The polypeptide is Methylated-DNA--protein-cysteine methyltransferase (Mgmt) (Rattus norvegicus (Rat)).